Here is a 383-residue protein sequence, read N- to C-terminus: Galactokinase (383 aa).

34–37 (EHTD) lines the substrate pocket. Residue 124–130 (GAGLSSS) coordinates ATP. Mg(2+) contacts are provided by S130 and E162. The Proton acceptor role is filled by D174. Y223 serves as a coordination point for substrate.

This sequence belongs to the GHMP kinase family. GalK subfamily.

It localises to the cytoplasm. The enzyme catalyses alpha-D-galactose + ATP = alpha-D-galactose 1-phosphate + ADP + H(+). It functions in the pathway carbohydrate metabolism; galactose metabolism. Functionally, catalyzes the transfer of the gamma-phosphate of ATP to D-galactose to form alpha-D-galactose-1-phosphate (Gal-1-P). This Yersinia pseudotuberculosis serotype O:1b (strain IP 31758) protein is Galactokinase.